The following is a 615-amino-acid chain: MAAVRGLRVSVKAEAPAGPALGLPSPEVESGLERGEPEPMEVEEGELEIVPVRRSLKELLPDTSRRYENKAGSFITGIDVTSKEAIEKKEQRAKRFHFRAEVNLAQRNVALDRDMMKKAIPKVRLETIYICGVDEMSTQDIFSYFKEYPPAHIEWLDDTSCNVVWLDEMTATRALINMSSLPAQDKMRSRDASEDKSSEKNKKDKQEDSSDDDETEEGEVEDENSSDVELDTLSQVEEESLLRNDLRPANKLAKGNRLFMRFATKDDKKELGAARRSQYYMKYGNPNYGGMKGILSNSWKRRYHSRRIQRDVIKKRALIGDDVGLTSYKHRHSGLVNVPEEPIEEEEEEEEEEEDQDMDADDRVVVEYHEELPGLKQPRERSLSRRSSASSSDSDEMDYDLELKMISTPSPKKSMKMTMYADEVESQLKSIRNPMRADSISTSNIKNRIGNKLPPEKFADVRHLLDEKRQHSCPRPAVSSTKPDIRQRLGKRPYSPEKAFSSNQVVRREPSSDVHSRLGVPRQDVKGLYSDTRERKSGGLWTRLGSTPKTKEKNTKKVDHRASGAEEDDSELQRAWGALIKEKEESRQKKSRLDSLPSLQIEVSRESSSGSEAES.

A Glycyl lysine isopeptide (Lys-Gly) (interchain with G-Cter in SUMO2) cross-link involves residue Lys-12. Low complexity predominate over residues Ala-15–Glu-27. The tract at residues Ala-15–Glu-43 is disordered. Ser-25 carries the phosphoserine modification. A Glycyl lysine isopeptide (Lys-Gly) (interchain with G-Cter in SUMO2) cross-link involves residue Lys-70. Ser-73 carries the post-translational modification Phosphoserine. An RNA recognition motif (RRM) domain region spans residues Glu-126 to Met-187. The WLDD motif; essential for 7-methylguanosine-containing mRNA cap binding signature appears at Trp-155 to Asp-158. Disordered regions lie at residues Pro-182 to Leu-233 and His-332 to Asp-400. Over residues Asp-185–Asp-208 the composition is skewed to basic and acidic residues. Lys-186 participates in a covalent cross-link: Glycyl lysine isopeptide (Lys-Gly) (interchain with G-Cter in SUMO2). 2 positions are modified to phosphoserine: Ser-209 and Ser-210. Composition is skewed to acidic residues over residues Ser-209 to Leu-230 and Glu-341 to Ala-360. Over residues Asp-361 to Leu-383 the composition is skewed to basic and acidic residues. The residue at position 408 (Thr-408) is a Phosphothreonine. Ser-410 bears the Phosphoserine mark. Disordered stretches follow at residues Ser-430–Pro-454 and Glu-467–Ser-615. A compositionally biased stretch (basic and acidic residues) spans Val-506 to Ser-516. Lys-536 participates in a covalent cross-link: Glycyl lysine isopeptide (Lys-Gly) (interchain with G-Cter in SUMO2). 2 stretches are compositionally biased toward basic and acidic residues: residues Lys-549–Gly-564 and Ile-580–Leu-593. Ser-563 bears the Phosphoserine mark. Low complexity predominate over residues Glu-606–Ser-615. At Ser-615 the chain carries Phosphoserine.

Belongs to the NCBP3 family. In terms of assembly, component of an alternative cap-binding complex (CBC) composed of NCBP1/CBP80 and NCBP3. Interacts with SRRT, KPNA3, THOC5 and EIF4A3.

It localises to the nucleus. Its subcellular location is the cytoplasm. Functionally, associates with NCBP1/CBP80 to form an alternative cap-binding complex (CBC) which plays a key role in mRNA export. NCBP3 serves as adapter protein linking the capped RNAs (m7GpppG-capped RNA) to NCBP1/CBP80. Unlike the conventional CBC with NCBP2 which binds both small nuclear RNA (snRNA) and messenger (mRNA) and is involved in their export from the nucleus, the alternative CBC with NCBP3 does not bind snRNA and associates only with mRNA thereby playing a role in only mRNA export. The alternative CBC is particularly important in cellular stress situations such as virus infections and the NCBP3 activity is critical to inhibit virus growth. The chain is Nuclear cap-binding protein subunit 3 from Mus musculus (Mouse).